Reading from the N-terminus, the 1213-residue chain is DNA-directed RNA polymerase subunit beta' (1213 aa).

4 residues coordinate Zn(2+): cysteine 60, cysteine 62, cysteine 75, and cysteine 78. Mg(2+) is bound by residues aspartate 450, aspartate 452, and aspartate 454. The Zn(2+) site is built by cysteine 819, cysteine 893, cysteine 900, and cysteine 903.

This sequence belongs to the RNA polymerase beta' chain family. In terms of assembly, the RNAP catalytic core consists of 2 alpha, 1 beta, 1 beta' and 1 omega subunit. When a sigma factor is associated with the core the holoenzyme is formed, which can initiate transcription. Mg(2+) serves as cofactor. It depends on Zn(2+) as a cofactor.

The enzyme catalyses RNA(n) + a ribonucleoside 5'-triphosphate = RNA(n+1) + diphosphate. Functionally, DNA-dependent RNA polymerase catalyzes the transcription of DNA into RNA using the four ribonucleoside triphosphates as substrates. This is DNA-directed RNA polymerase subunit beta' from Streptococcus pyogenes serotype M1.